Here is a 117-residue protein sequence, read N- to C-terminus: Cliotide T9 (117 aa).

The first 25 residues, 1–25 (MAYVRLACLAVIFFFAASVMFTVEA), serve as a signal peptide directing secretion. A cross-link (cyclopeptide (Gly-Asn)) is located at residues 26–55 (GIPCGESCVFIPCLTTVVGCSCKNKVCYNN). Disulfide bonds link Cys-29–Cys-45, Cys-33–Cys-47, and Cys-38–Cys-52. Residues 56–117 (HVIAAEANSI…YLLKDFLKMP (62 aa)) constitute a propeptide, removed in mature form.

In terms of processing, contains 3 disulfide bonds. This is a cyclic peptide. As to expression, expressed in seed but not in root, nodule, flower, stem, shoot, leaf and pod (at protein level).

In terms of biological role, probably participates in a plant defense mechanism. This chain is Cliotide T9, found in Clitoria ternatea (Butterfly pea).